We begin with the raw amino-acid sequence, 385 residues long: G2/mitotic-specific cyclin-B3 (385 aa).

The span at 1–16 (MMLRSQAKNVDLTSQA) shows a compositional bias: polar residues. Disordered regions lie at residues 1 to 48 (MMLR…HSKG) and 63 to 88 (SAKR…QKSR). Basic and acidic residues-rich tracts occupy residues 17–28 (DSRHQQKRKQAE) and 63–80 (SAKR…RDVE).

The protein belongs to the cyclin family. Cyclin AB subfamily.

The protein resides in the nucleus. Could be involved at the G2/M (mitosis) transition. Interacts with the CDK1 and CDK2 protein kinases. G2/M cyclins accumulate steadily during G2 and are abruptly destroyed at mitosis. Plays a role during oocyte meiosis II. This is G2/mitotic-specific cyclin-B3 (cyb-3) from Caenorhabditis elegans.